The primary structure comprises 1069 residues: MEACTSKSSLLLHSPLRTIPKLRLCTTISSEDVAYGRCNLTDQHLQIEGKNYSKNTFDHIFRTDATQDDMYSAFLSDMINSVFAGNDATVLAMGAKANGKDERLYGNSVSRNGLIQMAITQLMNAIDDNKDPEERIQVRMSAIMVSQKDSSIVDLLSPFNDPRHRVVKLVDDARTGVFLDNESEIRVETIDQALFYLNTAVDHRLIQDEQTHRTSHVFISLSLYSYKMGDKMQGGRRRLCFLDMGIGERNSTNGGMTMPALGSILLAMVQRNKHIPSRDSSVCQLIRCALSTSRFTTFLFSFGSKNDDNENIAHLACKIARTRVKSVMGHGRKPSGTFSSGTMDSNGSSSSFGTTTITPGGTPRTQRRFELESGSELSAAETVIFLGPSCSRTTSPASTTMPSTPTSIRPLHRTTRNHSGVDPVSKPLSVETKSSPTHNCHDGCIHSIPPMLRGHTPFLSPHLKLYDELCSPPNSSCASPVLSAPNAFGGKTAERRDDFGIMIAQPHIPLMKAKSKYNLDDGKMKQIMQWMETSEAPPILFSSPCYENSATSLDELRECVGILSHPLEDIIEQEEESMRTSTATTGGSKKDHPLRILSKQDLNIDSEAKDKDETELELVMAASLSSMRSHDILAKLEAMRNAQSGQNGQNGNIGTSQSNTDMDVSEMDMYRRASHLEEYAMQRVREIEDNKMKNKKKVKLGLNCCQQQSMISSGSTVVDWSQIERKKEREKDAMEEEKRKEVLRERRAKLKITELEIKRERNMIDKELDDKKGIANSIARQLQHFSLSPCRGGRTHRSVSTHRIDPPNASLPSTPTMSHKKMIGGSLAKLSASGASGSGPPSSPSLGYHQSLPRHSKLPTAVNGRRSSAERDRKTSKNSRNASSKERRSSGSKEELQWRSPYAQMTSPKTYGGPGTSSSGRGSSAPGSDFETPVVSATEKTANGTMPRSKRQSYSASSGYESANDYHIYATTNKKANILEKKRNEEKLFLVRQADEIRHRQWQLKKELEEAKRAIGQEEDAKMIANSSDQRLNGLSRTTMVDAMLQENRILEKRLIACRNHSMLVTTFI.

Positions Pro15 to Lys325 constitute a Kinesin motor domain. Disordered stretches follow at residues Met328–Gly374, Ser391–Pro436, and Glu572–Ser598. Interaction with unc-51 stretches follow at residues Gly331–Tyr517 and Tyr517–Asp719. 2 stretches are compositionally biased toward low complexity: residues Ser339–Arg364 and Ser391–Ser407. The segment at Ser403 to Lys877 is interaction with unc-73. The stretch at Asp719 to Asp769 forms a coiled coil. Positions Ser786–Tyr960 are disordered. Positions Gly824–Gly847 are enriched in low complexity. Residues Ser883–Gln897 are compositionally biased toward basic and acidic residues. Positions Thr906 to Ser928 are enriched in low complexity. A compositionally biased stretch (polar residues) spans Thr938–Tyr960. The stretch at Leu990 to Ser1027 forms a coiled coil.

It belongs to the TRAFAC class myosin-kinesin ATPase superfamily. Kinesin family. KIF26 subfamily. In terms of assembly, interacts with unc-51 and unc-73. In terms of processing, phosphorylated by unc-51.

It is found in the cytoplasm. It localises to the cytoskeleton. Functionally, required for posterior migration of cells and axon growth cones during nervous system assembly. In PLM neuron, regulates innexin unc-9 gap junction turnover by suppressing unc-9 transport out of the gap junctions. The protein is Kinesin-like protein vab-8 (vab-8) of Caenorhabditis briggsae.